Consider the following 172-residue polypeptide: Large ribosomal subunit protein uL10 (172 aa).

The protein belongs to the universal ribosomal protein uL10 family. Part of the ribosomal stalk of the 50S ribosomal subunit. The N-terminus interacts with L11 and the large rRNA to form the base of the stalk. The C-terminus forms an elongated spine to which L12 dimers bind in a sequential fashion forming a multimeric L10(L12)X complex.

Its function is as follows. Forms part of the ribosomal stalk, playing a central role in the interaction of the ribosome with GTP-bound translation factors. In Brucella anthropi (strain ATCC 49188 / DSM 6882 / CCUG 24695 / JCM 21032 / LMG 3331 / NBRC 15819 / NCTC 12168 / Alc 37) (Ochrobactrum anthropi), this protein is Large ribosomal subunit protein uL10.